The sequence spans 374 residues: MGEDFVVTPWEVRGKVDYEKLLRQFGAKPLTAEEVALLEKYAGDVHPLIKRGFFYAHRDFDFILKWHGEGRPWALYTGRGPSGPVHIGHMVPWILLKWFSDKFGVEVYFQMTDDEKFFDDPEMKLEEATGWAYENALDVIALGFGPDKLHLIVDTKDIAPLYPIAVRVAKKLTWNTVKATFGFTDSSNIGLIFYPSLQIAVAFLPTELKKEPTPVLIPCAIDQDPYFRLARDIADSLSYPKPTTLYSKFIMALTGESKMSASNPDSAIYTMDDDKTVKHKILNAFTGGRPTAEEQRKYGGNPDICPVFHYHMLFDPDDASVEKIRQDCKSGALLCGECKLKLHEKISKFLKEHRERREKARGKVDEYRLSVKLK.

The 'HIGH' region motif lies at 81–89 (PSGPVHIGH). The short motif at 258-262 (KMSAS) is the 'KMSKS' region element.

Belongs to the class-I aminoacyl-tRNA synthetase family.

The protein resides in the cytoplasm. The catalysed reaction is tRNA(Trp) + L-tryptophan + ATP = L-tryptophyl-tRNA(Trp) + AMP + diphosphate + H(+). This chain is Tryptophan--tRNA ligase, found in Pyrobaculum arsenaticum (strain DSM 13514 / JCM 11321 / PZ6).